Reading from the N-terminus, the 486-residue chain is Pup--protein ligase (486 aa).

E33 provides a ligand contact to Mg(2+). R76 provides a ligand contact to ATP. Position 78 (Y78) interacts with Mg(2+). Residue D80 is the Proton acceptor of the active site. A Mg(2+)-binding site is contributed by E86. 2 residues coordinate ATP: T89 and W451.

It belongs to the Pup ligase/Pup deamidase family. Pup-conjugating enzyme subfamily.

It carries out the reaction ATP + [prokaryotic ubiquitin-like protein]-L-glutamate + [protein]-L-lysine = ADP + phosphate + N(6)-([prokaryotic ubiquitin-like protein]-gamma-L-glutamyl)-[protein]-L-lysine.. It participates in protein degradation; proteasomal Pup-dependent pathway. Its pathway is protein modification; protein pupylation. Its function is as follows. Catalyzes the covalent attachment of the prokaryotic ubiquitin-like protein modifier Pup to the proteasomal substrate proteins, thereby targeting them for proteasomal degradation. This tagging system is termed pupylation. The ligation reaction involves the side-chain carboxylate of the C-terminal glutamate of Pup and the side-chain amino group of a substrate lysine. In Bifidobacterium longum (strain NCC 2705), this protein is Pup--protein ligase.